An 88-amino-acid chain; its full sequence is Small ribosomal subunit protein uS15c (88 aa).

The protein belongs to the universal ribosomal protein uS15 family. In terms of assembly, part of the 30S ribosomal subunit.

It is found in the plastid. The protein localises to the chloroplast. The protein is Small ribosomal subunit protein uS15c (rps15) of Cycas taitungensis (Prince sago).